A 555-amino-acid chain; its full sequence is Xylulose kinase (555 aa).

Substrate-binding residues include His-88, Arg-158, Asp-274, and Asn-275. ATP-binding positions include Trp-357, 455 to 456 (GA), and Asn-459.

Belongs to the FGGY kinase family.

It is found in the cytoplasm. The enzyme catalyses D-xylulose + ATP = D-xylulose 5-phosphate + ADP + H(+). The polypeptide is Xylulose kinase (Schizosaccharomyces pombe (strain 972 / ATCC 24843) (Fission yeast)).